A 271-amino-acid chain; its full sequence is uncharacterized protein (271 aa).

This is an uncharacterized protein from Saccharomyces cerevisiae (strain ATCC 204508 / S288c) (Baker's yeast).